The primary structure comprises 77 residues: Small ribosomal subunit protein bS21 (77 aa).

The segment covering 38 to 52 (KPSEKRAREKAEAVR) has biased composition (basic and acidic residues). Residues 38 to 77 (KPSEKRAREKAEAVRRTRKLARKRAQREGLISNGRGSPLK) are disordered. Positions 53–62 (RTRKLARKRA) are enriched in basic residues.

It belongs to the bacterial ribosomal protein bS21 family.

This Bartonella henselae (strain ATCC 49882 / DSM 28221 / CCUG 30454 / Houston 1) (Rochalimaea henselae) protein is Small ribosomal subunit protein bS21.